Reading from the N-terminus, the 396-residue chain is MSVRLVLAKGREKSLLRRHPWVFSGAVARMEGKASLGETIDIVDHQGKWLARGAYSPASQIRARVWTFDQAESIDIAFFTRRLHQAQQWRDWLAKKDGLDSYRLIAGESDGLPGITIDRFGNFLVLQLLSAGAEYQRAALISALQTQYPECAIYDRSDVAVRKKEGMELTQGPVTGELPPALLPIEEHGMKLLVDIQGGHKTGYYLDQRDSRLATRRYVENQRVLNCFSYTGGFAVSALMGGCRQVVSVDTSQEALDIAKQNVELNKLDLSKAEFVRDDVFKLLRAYRDRREKFDVIVMDPPKFVENKSQLMGACRGYKDINMLAIQLLNPGGVLLTFSCSGLMTTDLFQKIIADAAIDAGRDVQFIEQFRQAADHPVIATYPEGLYLKGFACRVM.

The region spanning 2–79 (SVRLVLAKGR…QAESIDIAFF (78 aa)) is the PUA domain.

Belongs to the methyltransferase superfamily. RlmI family.

The protein resides in the cytoplasm. The catalysed reaction is cytidine(1962) in 23S rRNA + S-adenosyl-L-methionine = 5-methylcytidine(1962) in 23S rRNA + S-adenosyl-L-homocysteine + H(+). In terms of biological role, specifically methylates the cytosine at position 1962 (m5C1962) of 23S rRNA. The protein is Ribosomal RNA large subunit methyltransferase I of Citrobacter koseri (strain ATCC BAA-895 / CDC 4225-83 / SGSC4696).